Here is a 427-residue protein sequence, read N- to C-terminus: Histidinol dehydrogenase (427 aa).

Positions 123, 185, and 208 each coordinate NAD(+). Substrate-binding residues include Ser-231, Gln-253, and His-256. Zn(2+)-binding residues include Gln-253 and His-256. Active-site proton acceptor residues include Glu-321 and His-322. Substrate contacts are provided by His-322, Asp-355, Glu-409, and His-414. Asp-355 contacts Zn(2+). His-414 contacts Zn(2+).

Belongs to the histidinol dehydrogenase family. It depends on Zn(2+) as a cofactor.

The catalysed reaction is L-histidinol + 2 NAD(+) + H2O = L-histidine + 2 NADH + 3 H(+). The protein operates within amino-acid biosynthesis; L-histidine biosynthesis; L-histidine from 5-phospho-alpha-D-ribose 1-diphosphate: step 9/9. Catalyzes the sequential NAD-dependent oxidations of L-histidinol to L-histidinaldehyde and then to L-histidine. This is Histidinol dehydrogenase (hisD) from Bacillus subtilis (strain 168).